The following is a 603-amino-acid chain: Vacuolar protein sorting-associated protein 33A (603 aa).

This sequence belongs to the STXBP/unc-18/SEC1 family. In terms of assembly, probable component of the homotypic fusion and vacuole protein sorting (HOPS) complex consisting of the core class C Vps proteins vps-11, vps-16, vps-18, and which further associates with vps-33.1, vps-39 and vps-41. Interacts with spe-39. Ubiquitously expressed at high levels in somatic tissues including the pharynx, muscles, hypodermis, neurons, coelomocytes and spermatheca. Expressed in the intestine.

It is found in the lysosome. The protein localises to the early endosome. The protein resides in the late endosome. It localises to the apical cell membrane. Functionally, plays a role in vesicle-mediated protein trafficking to lysosomal compartments including the endocytic membrane transport pathways. Believed to act as a component of the putative HOPS endosomal tethering complex which is proposed to be involved in the rab-5-to-rab-7 endosome conversion probably implicating sand-1, and via binding SNAREs and SNARE complexes to mediate tethering and docking events during SNARE-mediated membrane fusion. The HOPS complex is proposed to be recruited to rab-7 on the late endosomal membrane and to regulate late endocytic, phagocytic and autophagic traffic towards lysosomes. Within the HOPS complex, contributes to the normal development of gut granules in embryonic and adult intestinal cells. Required for endosome/lysosome fusion. Required for early embryonic development. In Caenorhabditis elegans, this protein is Vacuolar protein sorting-associated protein 33A.